Consider the following 940-residue polypeptide: Chordin (940 aa).

Residues 1 to 19 form the signal peptide; the sequence is MMEGLLWILLSVIIASVHG. Residues 42–118 enclose the VWFC 1 domain; sequence SGCSFGGRFY…LPGHCCKTCP (77 aa). 4 CHRD domains span residues 162 to 277, 279 to 398, 404 to 519, and 525 to 652; these read TTTD…KHRA, FAET…GRRS, SVLS…LLPY, and RRNE…VPNH. N-linked (GlcNAc...) asparagine glycans are attached at residues N347 and N430. VWFC domains lie at 689–748, 767–836, and 855–919; these read HSCF…PICE, EGCY…KECP, and RLCK…PECI.

Belongs to the chordin family. Interacts with twsg1 and/or bmp4. Cleaved by tolloid proteases; cleavage participates in dorsoventral patterning during early development.

It localises to the secreted. Its function is as follows. Dorsalizing factor. Key developmental protein that dorsalizes early vertebrate embryonic tissues by binding to ventralizing TGF-beta family bone morphogenetic proteins (BMPs) and sequestering them in latent complexes. In Danio rerio (Zebrafish), this protein is Chordin (chd).